The sequence spans 241 residues: Ribulose-phosphate 3-epimerase 1 (241 aa).

Residue S21 coordinates substrate. Positions 46, 48, and 79 each coordinate a divalent metal cation. Residue D48 is the Proton acceptor of the active site. Residues H79, 155–158 (GFGG), 192–194 (DGG), and 214–215 (GS) each bind substrate. D192 contributes to the a divalent metal cation binding site. D192 functions as the Proton donor in the catalytic mechanism.

It belongs to the ribulose-phosphate 3-epimerase family. It depends on a divalent metal cation as a cofactor.

It carries out the reaction D-ribulose 5-phosphate = D-xylulose 5-phosphate. It functions in the pathway carbohydrate degradation. Its function is as follows. Catalyzes the reversible epimerization of D-ribulose 5-phosphate to D-xylulose 5-phosphate. In Cupriavidus necator (strain ATCC 17699 / DSM 428 / KCTC 22496 / NCIMB 10442 / H16 / Stanier 337) (Ralstonia eutropha), this protein is Ribulose-phosphate 3-epimerase 1.